A 422-amino-acid chain; its full sequence is UDP-N-acetylglucosamine 1-carboxyvinyltransferase (422 aa).

22 to 23 (KN) is a binding site for phosphoenolpyruvate. R94 is a UDP-N-acetyl-alpha-D-glucosamine binding site. Residue C118 is the Proton donor of the active site. C118 carries the post-translational modification 2-(S-cysteinyl)pyruvic acid O-phosphothioketal. UDP-N-acetyl-alpha-D-glucosamine contacts are provided by residues 123 to 127 (RPVDL), D309, and I331.

Belongs to the EPSP synthase family. MurA subfamily.

It is found in the cytoplasm. The catalysed reaction is phosphoenolpyruvate + UDP-N-acetyl-alpha-D-glucosamine = UDP-N-acetyl-3-O-(1-carboxyvinyl)-alpha-D-glucosamine + phosphate. It functions in the pathway cell wall biogenesis; peptidoglycan biosynthesis. In terms of biological role, cell wall formation. Adds enolpyruvyl to UDP-N-acetylglucosamine. This is UDP-N-acetylglucosamine 1-carboxyvinyltransferase from Cereibacter sphaeroides (strain ATCC 17023 / DSM 158 / JCM 6121 / CCUG 31486 / LMG 2827 / NBRC 12203 / NCIMB 8253 / ATH 2.4.1.) (Rhodobacter sphaeroides).